Here is a 338-residue protein sequence, read N- to C-terminus: Malate dehydrogenase, mitochondrial (338 aa).

A mitochondrion-targeting transit peptide spans 1–24; the sequence is MLSALARPVGAALRRSFSTSAQNN. Residues 31 to 37 and Asp57 contribute to the NAD(+) site; that span reads GASGGIG. A glycan (O-linked (GlcNAc) serine) is linked at Ser33. Lys78 and Lys91 each carry N6-acetyllysine; alternate. 2 positions are modified to N6-succinyllysine; alternate: Lys78 and Lys91. Residues Arg104 and Arg110 each contribute to the substrate site. Residues Asn117 and 140-142 each bind NAD(+); that span reads ISN. Asn142 provides a ligand contact to substrate. N6-acetyllysine is present on Lys165. Arg176 lines the substrate pocket. Lys185 is subject to N6-acetyllysine; alternate. Position 185 is an N6-succinyllysine; alternate (Lys185). His200 functions as the Proton acceptor in the catalytic mechanism. Residue Lys203 is modified to N6-succinyllysine. An N6-acetyllysine; alternate mark is found at Lys215 and Lys239. Lys215 and Lys239 each carry N6-succinyllysine; alternate. Residue Lys239 is modified to N6-malonyllysine; alternate. Ser246 is modified (phosphoserine). Met251 provides a ligand contact to NAD(+). Lys269 is modified (N6-succinyllysine). N6-acetyllysine; alternate is present on residues Lys296, Lys301, Lys307, Lys314, and Lys324. N6-succinyllysine; alternate occurs at positions 296, 301, 307, 314, and 324. Position 307 is an N6-malonyllysine; alternate (Lys307). Ser326 is subject to Phosphoserine. Lys328, Lys329, and Lys335 each carry N6-acetyllysine; alternate. Lys328 carries the N6-succinyllysine; alternate modification. The residue at position 329 (Lys329) is an N6-malonyllysine; alternate. N6-succinyllysine; alternate is present on Lys335.

Belongs to the LDH/MDH superfamily. MDH type 1 family. As to quaternary structure, homodimer. Post-translationally, acetylation is enhanced after treatment either with trichostin A (TCA) or with nicotinamide (NAM) with the appearance of tri- and tetraacetylations. Glucose also increases acetylation. As to expression, expressed in flagella of epididymal sperm.

It localises to the mitochondrion matrix. The enzyme catalyses (S)-malate + NAD(+) = oxaloacetate + NADH + H(+). Enzyme activity is enhanced by acetylation. The chain is Malate dehydrogenase, mitochondrial (Mdh2) from Rattus norvegicus (Rat).